Here is a 536-residue protein sequence, read N- to C-terminus: L-aspartate oxidase 2 (536 aa).

FAD contacts are provided by residues Glu-22–Ala-25 and Ser-51–Gly-58. The Proton donor/acceptor role is filled by Arg-284. FAD contacts are provided by residues Glu-369 and Ser-385 to Leu-386.

The protein belongs to the FAD-dependent oxidoreductase 2 family. NadB subfamily. FAD is required as a cofactor.

It is found in the cytoplasm. The catalysed reaction is L-aspartate + O2 = iminosuccinate + H2O2. It functions in the pathway cofactor biosynthesis; NAD(+) biosynthesis; iminoaspartate from L-aspartate (oxidase route): step 1/1. Functionally, catalyzes the oxidation of L-aspartate to iminoaspartate, the first step in the de novo biosynthesis of NAD(+). The chain is L-aspartate oxidase 2 (nadB2) from Ralstonia nicotianae (strain ATCC BAA-1114 / GMI1000) (Ralstonia solanacearum).